Here is a 170-residue protein sequence, read N- to C-terminus: uncharacterized protein (170 aa).

It belongs to the mimivirus L223/L227/L812 family.

This is an uncharacterized protein from Acanthamoeba polyphaga mimivirus (APMV).